A 548-amino-acid polypeptide reads, in one-letter code: Chaperonin GroEL (548 aa).

ATP is bound by residues 30 to 33 (TLGP), Lys51, 87 to 91 (DGTTT), Gly415, 479 to 481 (NAA), and Asp495.

The protein belongs to the chaperonin (HSP60) family. In terms of assembly, forms a cylinder of 14 subunits composed of two heptameric rings stacked back-to-back. Interacts with the co-chaperonin GroES.

It localises to the cytoplasm. The enzyme catalyses ATP + H2O + a folded polypeptide = ADP + phosphate + an unfolded polypeptide.. Functionally, together with its co-chaperonin GroES, plays an essential role in assisting protein folding. The GroEL-GroES system forms a nano-cage that allows encapsulation of the non-native substrate proteins and provides a physical environment optimized to promote and accelerate protein folding. This is Chaperonin GroEL from Oleidesulfovibrio alaskensis (strain ATCC BAA-1058 / DSM 17464 / G20) (Desulfovibrio alaskensis).